Reading from the N-terminus, the 301-residue chain is Phosphate transport system permease protein PstA 2 (301 aa).

Transmembrane regions (helical) follow at residues 36–56, 83–103, 127–147, 149–169, 209–229, and 274–294; these read ACVC…IGVV, IIGT…VSVL, LSGI…VVYF, WGFS…PYIA, GIVT…APLL, and ALLL…INWL. Positions 83 to 288 constitute an ABC transmembrane type-1 domain; that stretch reads IIGTAVLAIG…VFLLLLIFIG (206 aa).

The protein belongs to the binding-protein-dependent transport system permease family. CysTW subfamily.

It localises to the cell membrane. Part of the binding-protein-dependent transport system for phosphate; probably responsible for the translocation of the substrate across the membrane. In Mycobacterium bovis (strain ATCC BAA-935 / AF2122/97), this protein is Phosphate transport system permease protein PstA 2 (pstA2).